We begin with the raw amino-acid sequence, 260 residues long: Protein-L-isoaspartate O-methyltransferase (260 aa).

Positions 1-27 (MKSPVAGAVLDPSTPPPTTGTSWRWPG) are disordered. The active site involves Ser-92.

It belongs to the methyltransferase superfamily. L-isoaspartyl/D-aspartyl protein methyltransferase family.

It is found in the cytoplasm. It carries out the reaction [protein]-L-isoaspartate + S-adenosyl-L-methionine = [protein]-L-isoaspartate alpha-methyl ester + S-adenosyl-L-homocysteine. Its function is as follows. Catalyzes the methyl esterification of L-isoaspartyl residues in peptides and proteins that result from spontaneous decomposition of normal L-aspartyl and L-asparaginyl residues. It plays a role in the repair and/or degradation of damaged proteins. The polypeptide is Protein-L-isoaspartate O-methyltransferase (pcm) (Aeropyrum pernix (strain ATCC 700893 / DSM 11879 / JCM 9820 / NBRC 100138 / K1)).